We begin with the raw amino-acid sequence, 360 residues long: Ribosomal RNA large subunit methyltransferase M (360 aa).

Residues serine 187, 220 to 223, aspartate 239, aspartate 259, and aspartate 276 contribute to the S-adenosyl-L-methionine site; that span reads CPGG. Lysine 305 (proton acceptor) is an active-site residue.

The protein belongs to the class I-like SAM-binding methyltransferase superfamily. RNA methyltransferase RlmE family. RlmM subfamily. Monomer.

Its subcellular location is the cytoplasm. It carries out the reaction cytidine(2498) in 23S rRNA + S-adenosyl-L-methionine = 2'-O-methylcytidine(2498) in 23S rRNA + S-adenosyl-L-homocysteine + H(+). In terms of biological role, catalyzes the 2'-O-methylation at nucleotide C2498 in 23S rRNA. This Shewanella sediminis (strain HAW-EB3) protein is Ribosomal RNA large subunit methyltransferase M.